The sequence spans 189 residues: Apolipoprotein D (189 aa).

An N-terminal signal peptide occupies residues 1–20 (MATMLLLLATLAGLFTTTEG). Gln-21 carries the post-translational modification Pyrrolidone carboxylic acid. 2 disulfides stabilise this stretch: Cys-28-Cys-134 and Cys-61-Cys-185. 2 N-linked (GlcNAc...) asparagine glycosylation sites follow: Asn-65 and Asn-98.

The protein belongs to the calycin superfamily. Lipocalin family. Homodimer. In terms of tissue distribution, expressed in liver, kidney, bladder, adrenal, cerebrum, duodenum, testis, lung, spleen, pancreas, heart and skin.

The protein resides in the secreted. APOD occurs in the macromolecular complex with lecithin-transport and binding of bilin. Appears to be able to transport a variety of ligands in a number of different contexts. This chain is Apolipoprotein D (Apod), found in Rattus norvegicus (Rat).